The primary structure comprises 63 residues: Sarcotoxin-1B (63 aa).

A signal peptide spans 1–23 (MNFNKVFIFVALILAVFAGQSQA). Arg62 is modified (arginine amide).

It belongs to the cecropin family.

It is found in the secreted. Sarcotoxins, which are potent bactericidal proteins, are produced in response to injury. They are cytotoxic to both Gram-positive and Gram-negative bacteria. This is Sarcotoxin-1B from Sarcophaga peregrina (Flesh fly).